Here is a 96-residue protein sequence, read N- to C-terminus: Large ribosomal subunit protein bL28 (96 aa).

The tract at residues 1–22 is disordered; sequence MSRRCELTGKGPMTGNNVSHAN.

Belongs to the bacterial ribosomal protein bL28 family.

The polypeptide is Large ribosomal subunit protein bL28 (Ruegeria sp. (strain TM1040) (Silicibacter sp.)).